We begin with the raw amino-acid sequence, 234 residues long: Sugar fermentation stimulation protein homolog (234 aa).

The protein belongs to the SfsA family.

This is Sugar fermentation stimulation protein homolog from Shewanella frigidimarina (strain NCIMB 400).